The sequence spans 414 residues: 2,3-diketo-5-methylthiopentyl-1-phosphate enolase (414 aa).

The Proton acceptor role is filled by lysine 99. Substrate is bound by residues lysine 148, 174 to 177 (KDDE), histidine 265, glycine 338, and 360 to 361 (GG). Residues lysine 174, aspartate 176, and glutamate 177 each coordinate Mg(2+). Lysine 174 is subject to N6-carboxylysine.

This sequence belongs to the RuBisCO large chain family. Type IV subfamily. As to quaternary structure, homodimer. The cofactor is Mg(2+).

The catalysed reaction is 5-methylsulfanyl-2,3-dioxopentyl phosphate = 2-hydroxy-5-methylsulfanyl-3-oxopent-1-enyl phosphate. Its pathway is amino-acid biosynthesis; L-methionine biosynthesis via salvage pathway; L-methionine from S-methyl-5-thio-alpha-D-ribose 1-phosphate: step 3/6. In terms of biological role, catalyzes the enolization of 2,3-diketo-5-methylthiopentyl-1-phosphate (DK-MTP-1-P) into 2-hydroxy-3-keto-5-methylthiopentenyl-1-phosphate (HK-MTPenyl-1-P). This is 2,3-diketo-5-methylthiopentyl-1-phosphate enolase from Bacillus cereus (strain ATCC 10987 / NRS 248).